Consider the following 593-residue polypeptide: Mitoguardin 2 (593 aa).

Helical transmembrane passes span Met-11–Gly-31 and Pro-42–Ala-62. 2 disordered regions span residues Lys-101–Ser-134 and Leu-195–Ser-228. Residues Arg-107 to Ile-123 are compositionally biased toward polar residues. The span at Ser-124–Ser-134 shows a compositional bias: low complexity. At Ser-132 the chain carries Phosphoserine. A Phosphothreonine modification is found at Thr-206. 3 positions are modified to phosphoserine: Ser-220, Ser-224, and Ser-228. Phosphothreonine is present on Thr-273. Phosphoserine is present on residues Ser-276 and Ser-295. Positions Ser-292 to Glu-298 match the FFAT motif. Residues Ile-563–Pro-583 traverse the membrane as a helical segment.

The protein belongs to the mitoguardin family. As to quaternary structure, homodimer and heterodimer; forms heterodimers with MIGA1. Interacts with PLD6/MitoPLD. Interacts (via phosphorylated FFAT motif) with MOSPD2. Post-translationally, phosphorylation at Ser-295 of the FFAT motif activates interaction with MOSPD2.

The protein localises to the mitochondrion outer membrane. Functionally, regulator of mitochondrial fusion: acts by forming homo- and heterodimers at the mitochondrial outer membrane and facilitating the formation of PLD6/MitoPLD dimers. May act by regulating phospholipid metabolism via PLD6/MitoPLD. This is Mitoguardin 2 from Bos taurus (Bovine).